The primary structure comprises 419 residues: Innexin-2 (419 aa).

The next 4 helical transmembrane spans lie at 33–53, 108–128, 184–204, and 270–290; these read AWFT…KQYF, PLVL…WNLF, INYF…MVLL, and LYIC…AGMI.

The protein belongs to the pannexin family.

The protein resides in the cell membrane. It localises to the cell junction. The protein localises to the gap junction. In terms of biological role, structural component of the gap junctions. This Caenorhabditis elegans protein is Innexin-2 (inx-2).